We begin with the raw amino-acid sequence, 155 residues long: Endoribonuclease YbeY (155 aa).

Positions 116, 120, and 126 each coordinate Zn(2+).

This sequence belongs to the endoribonuclease YbeY family. Requires Zn(2+) as cofactor.

It is found in the cytoplasm. Its function is as follows. Single strand-specific metallo-endoribonuclease involved in late-stage 70S ribosome quality control and in maturation of the 3' terminus of the 16S rRNA. This Colwellia psychrerythraea (strain 34H / ATCC BAA-681) (Vibrio psychroerythus) protein is Endoribonuclease YbeY.